The chain runs to 267 residues: Transcription factor HES-1-A (267 aa).

Positions 1 to 43 (MPADVMEKNSSSPVAATPASVSNTPDKPKTASEHRKSSKPIME) are disordered. Residues 10–22 (SSSPVAATPASVS) are compositionally biased toward low complexity. Residues 26–35 (DKPKTASEHR) are compositionally biased toward basic and acidic residues. Residues 34-91 (HRKSSKPIMEKRRRARINESLGQLKTLILDALKKDSSRHSKLEKADILEMTVKHLRNL) form the bHLH domain. Positions 110-143 (YRAGFSECMNEVTRFLSTCEGVNTDVRTRLLGHL) constitute an Orange domain. Residues 264-267 (WRPW) carry the WRPW motif motif.

Transcription repression requires formation of a complex with a corepressor protein of the Groucho/TLE family. Interacts with the bHLH protein hes2, and binds DNA in the form of a heterodimer with the bHLH protein hey1/hrt1. Interacts with the bHLH protein hes6; this interaction may inhibit the transcriptional repressor activity. As to expression, starting from late neurula stage, weakly expressed in midline neural cells, where expression is restricted to the superficial layer of the prospective floorplate. Expressed in the posterior somitic mesoderm (PSM) at tailbud stage. During early tailbud stages, broadly expressed within the pronephric mesoderm both around and inside the developing pronephros. During late tailbud to early tadpole stages, expressed more ventrally in the pronephros, and although initially expressed in both the lateral and medial layers, by these later stages expression is predominantly in the lateral layer. Pronephric expression is no longer detectable in late tadpoles (stage 35).

It is found in the nucleus. In terms of biological role, transcriptional repressor of a subset of early mesodermal genes including myod1 and t/bra. Binds DNA on N-box motifs: 5'-CACNAG-3'. Acts as a negative regulator of myogenesis, mediating Notch signaling to repress expression of myod1. In Xenopus laevis (African clawed frog), this protein is Transcription factor HES-1-A (hes1-a).